A 669-amino-acid chain; its full sequence is MVKKKVATKKNSPSLAIAKKKSRSNKDVVSVEAPIISSYNDRIRPLLDTVDRLRNLNVMREGIHLPTIVVVGDQSSGKSSVLESLAGISLPRGQGICTRVPLVMRLQRSSSPEPEIWLEYNDKVVPTDEEHIAEAIRAATDVIAGSGKGVSDAPLTLHVKKAGVPDLTMVDLPGITRVPVNGQPENIYEQISGMIMEYIEPQESIILNVLSATVDFTTCESIRMSRKVDKTGQRTLAVVTKADMAPEGLLQKVTADDVSIVLGYVCVRNRIGEETYEEARMQEELLFRTHPVLSLIDEDIVGIPVLAQKLMLIQSSMIARCLPKIVSKINQKLDTAVLELNKLPMVMASTGEALMALMDIIGSAKESLLRILVQGDFSEYPDDQNMHCTARLADMLSQFSDSLQAKPKEVAEFLMDEIKILDECKCVGLPNFIPRSAFLAILSQHVDGIQDKPVEFINKIWDYIEDVLSSVTAKRSDNFPQIQSSIKRAGRNLISKIKEQSVNRVMEIVEMEKLTDYTCNPEYMTSWTQKTSAQESFIDAVVKNENIPDYFSVTGFGNVKISHLRKYHAHLLIPAFDMKMRITSYWKIVLRRIVDNLALYLQLSVKSLVNTRFQKEIVAEMVDPRDGGGVEKMLEESPLVASKREKLQNSIKLLKESKDAVAAIVDQNC.

Positions 1-21 (MVKKKVATKKNSPSLAIAKKK) are disordered. One can recognise a Dynamin-type G domain in the interval 62–323 (GIHLPTIVVV…QSSMIARCLP (262 aa)). The interval 72-79 (GDQSSGKS) is G1 motif. Position 72–79 (72–79 (GDQSSGKS)) interacts with GTP. Residues 97–99 (CTR) form a G2 motif region. Positions 171 to 174 (DLPG) are G3 motif. GTP contacts are provided by residues 171–175 (DLPGI) and 240–243 (TKAD). A G4 motif region spans residues 240–243 (TKAD). A region of interest (G5 motif) is located at residue Glu273. Positions 575 to 669 (AFDMKMRITS…AVAAIVDQNC (95 aa)) constitute a GED domain.

The protein belongs to the TRAFAC class dynamin-like GTPase superfamily. Dynamin/Fzo/YdjA family.

Its subcellular location is the cytoplasm. The protein resides in the cytoskeleton. Putative microtubule-associated force-producing protein, able to bind and hydrolyze GTP. The protein is Dynamin-related protein 4C (DRP4C) of Arabidopsis thaliana (Mouse-ear cress).